The sequence spans 123 residues: MSINKQQILDAVSEMSVLEISELVSMMEKKFGVSSINNNNINVNKVDESVEEKSEFDVLLLEIGKNKISVIKSVRSALSLGLKESKDLIESELPITLKTGLNKKDAESLKKEIETSGARIELK.

Belongs to the bacterial ribosomal protein bL12 family. As to quaternary structure, homodimer. Part of the ribosomal stalk of the 50S ribosomal subunit. Forms a multimeric L10(L12)X complex, where L10 forms an elongated spine to which 2 to 4 L12 dimers bind in a sequential fashion. Binds GTP-bound translation factors.

Its function is as follows. Forms part of the ribosomal stalk which helps the ribosome interact with GTP-bound translation factors. Is thus essential for accurate translation. The protein is Large ribosomal subunit protein bL12 of Wigglesworthia glossinidia brevipalpis.